Consider the following 37-residue polypeptide: Large ribosomal subunit protein bL36 (37 aa).

It belongs to the bacterial ribosomal protein bL36 family.

The protein is Large ribosomal subunit protein bL36 of Treponema pallidum (strain Nichols).